The following is a 315-amino-acid chain: Thymidylate synthase (315 aa).

DUMP contacts are provided by residues arginine 22 and 177–178; that span reads RR. Cysteine 197 (nucleophile) is an active-site residue. DUMP contacts are provided by residues 217 to 220, asparagine 228, and 258 to 260; these read RSAD and HLY. Residue aspartate 220 participates in (6R)-5,10-methylene-5,6,7,8-tetrahydrofolate binding. A (6R)-5,10-methylene-5,6,7,8-tetrahydrofolate-binding site is contributed by alanine 314.

Belongs to the thymidylate synthase family. Bacterial-type ThyA subfamily. As to quaternary structure, homodimer.

The protein localises to the cytoplasm. The catalysed reaction is dUMP + (6R)-5,10-methylene-5,6,7,8-tetrahydrofolate = 7,8-dihydrofolate + dTMP. It functions in the pathway pyrimidine metabolism; dTTP biosynthesis. Its function is as follows. Catalyzes the reductive methylation of 2'-deoxyuridine-5'-monophosphate (dUMP) to 2'-deoxythymidine-5'-monophosphate (dTMP) while utilizing 5,10-methylenetetrahydrofolate (mTHF) as the methyl donor and reductant in the reaction, yielding dihydrofolate (DHF) as a by-product. This enzymatic reaction provides an intracellular de novo source of dTMP, an essential precursor for DNA biosynthesis. The sequence is that of Thymidylate synthase from Enterococcus faecalis (strain ATCC 700802 / V583).